The chain runs to 441 residues: FBD-associated F-box protein At5g18780 (441 aa).

One can recognise an F-box domain in the interval glutamate 10 to aspartate 56. Positions leucine 366–leucine 410 constitute an FBD domain.

This Arabidopsis thaliana (Mouse-ear cress) protein is FBD-associated F-box protein At5g18780.